The sequence spans 361 residues: MDVAALVSGGVDSSVVVHRLCEEGYKPAIFYIRIGMEDKDGYIDCPAEEDIELTTLIARRYGCPFEVVDLHKEYWERVVSYTVETVRRGLTPNPDMMCNKLIKFGCFEERWGYQFDRIATGHYATTDLLNGKTYLSTAKDPVKDQTDFLAQINFAQISKLMFPIGHLLKSEVRAIANAAGLPSAKRKDSQGICFLGKIDYNDFIERYLGKKEGRIIELETGKVIGRHQGYWFHTIGQRKGLGLSGGPWFVVKKDIKRNIILVSRGYDPDAQYGKTIEMETFDFITEDAYEAGYWNREDATPVTFKIRHTPEFTRGLLYKGEKGYRLESEERIQGIAPGQYCVIYDEDHHLCYGSGMITKGR.

ATP-binding positions include 6–13 (LVSGGVDS) and Ile-32. The interaction with target base in tRNA stretch occupies residues 93 to 95 (NPD). The Nucleophile role is filled by Cys-98. Cys-98 and Cys-193 are oxidised to a cystine. Gly-121 contacts ATP. The tract at residues 143 to 145 (KDQ) is interaction with tRNA. Cys-193 acts as the Cysteine persulfide intermediate in catalysis.

Belongs to the MnmA/TRMU family.

The protein resides in the cytoplasm. It catalyses the reaction S-sulfanyl-L-cysteinyl-[protein] + uridine(34) in tRNA + AH2 + ATP = 2-thiouridine(34) in tRNA + L-cysteinyl-[protein] + A + AMP + diphosphate + H(+). In terms of biological role, catalyzes the 2-thiolation of uridine at the wobble position (U34) of tRNA, leading to the formation of s(2)U34. In Porphyromonas gingivalis (strain ATCC BAA-308 / W83), this protein is tRNA-specific 2-thiouridylase MnmA.